The chain runs to 380 residues: Guanine nucleotide-binding protein alpha-1 subunit (380 aa).

A disordered region spans residues 1-25 (MGSSCSRSHSLSEAETTKNAKSADI). Gly2 carries N-myristoyl glycine lipidation. The S-palmitoyl cysteine moiety is linked to residue Cys5. Residues 10–25 (SLSEAETTKNAKSADI) are compositionally biased toward basic and acidic residues. Positions 38–380 (HIHKLLLLGA…ESMRRSREGT (343 aa)) constitute a G-alpha domain. A G1 motif region spans residues 41-54 (KLLLLGAGESGKST). GTP contacts are provided by Glu49, Ser50, Gly51, Lys52, Ser53, Thr54, Asp163, Leu188, Tyr189, Thr194, Gly222, Asn288, Lys289, Asp291, and Ala356. Ser53 contributes to the Mg(2+) binding site. Residues 186-194 (DVLYARVRT) form a G2 motif region. Residue Thr194 coordinates Mg(2+). Residues 215 to 224 (YRLYDVGGQR) form a G3 motif region. A G4 motif region spans residues 284-291 (ILFLNKFD). Residues 354 to 359 (TTALDQ) are G5 motif.

This sequence belongs to the G-alpha family. G proteins are composed of 3 units; alpha, beta and gamma. The alpha chain contains the guanine nucleotide binding site. Interacts with COLD1. It depends on Mg(2+) as a cofactor.

It localises to the cell membrane. Functionally, guanine nucleotide-binding proteins (G proteins) are involved as modulators or transducers in various transmembrane signaling systems. May function in a signal transduction pathway required for normal growth and development of internodes, leaves, panicles and seeds. Involved in gibberellin signal transduction. Involved in R gene-mediated disease resistance. Functions upstream of the small GTPase RAC1 in the early steps of signaling. Involved in brassinosteroid response. May not be a signaling molecule in BRI1-mediated perception or transduction. The protein is Guanine nucleotide-binding protein alpha-1 subunit (GPA1) of Oryza sativa subsp. indica (Rice).